Here is a 278-residue protein sequence, read N- to C-terminus: Large ribosomal subunit protein uL2 (278 aa).

Disordered stretches follow at residues 26–57 (RSTPEKSLVRPLHSKGGRNNAGRVTVRHQGGG) and 225–278 (VMNP…NKKR). Positions 258–278 (RSPKKASNKYIVRRRKTNKKR) are enriched in basic residues.

The protein belongs to the universal ribosomal protein uL2 family. As to quaternary structure, part of the 50S ribosomal subunit. Forms a bridge to the 30S subunit in the 70S ribosome.

Functionally, one of the primary rRNA binding proteins. Required for association of the 30S and 50S subunits to form the 70S ribosome, for tRNA binding and peptide bond formation. It has been suggested to have peptidyltransferase activity; this is somewhat controversial. Makes several contacts with the 16S rRNA in the 70S ribosome. The chain is Large ribosomal subunit protein uL2 from Streptomyces coelicolor (strain ATCC BAA-471 / A3(2) / M145).